The following is a 247-amino-acid chain: Submandibular gland secretory Glx-rich protein CB (247 aa).

Residues 1–18 (MLVVLLTAALLALSSAQG) form the signal peptide. The segment at 14-219 (SSAQGTDEEV…PQHYRGRPPK (206 aa)) is disordered. 7 stretches are compositionally biased toward low complexity: residues 39 to 50 (PVDSGSDPPSAD), 58 to 71 (EGES…EPPA), 81 to 93 (QQEP…QEPP), 104 to 116 (QQEP…QEPP), 126 to 139 (QQQQ…QEPP), 150 to 159 (QQESTQAENQ), and 178 to 196 (VESP…QQTN). 5 repeat units span residues 67 to 89 (EEPP…QAEN), 90 to 112 (QEPP…QAEN), 113 to 135 (QEPP…QAEN), 136 to 158 (QEPP…QAEN), and 159 to 181 (QEPS…VESP). A 5 X 23 AA tandem repeats region spans residues 67–181 (EEPPATSGSE…QPEEGNVESP (115 aa)). Over residues 197 to 212 (PEEKPPAPKTQEEPQH) the composition is skewed to basic and acidic residues.

In terms of tissue distribution, submandibular gland acinar cells.

It localises to the secreted. GRP proteins have a marked affinity for hydroxyapatite. They may play a role in the formation of the protective acquired pellicle at the saliva-tooth interface. The protein is Submandibular gland secretory Glx-rich protein CB (Grpcb) of Rattus norvegicus (Rat).